A 321-amino-acid chain; its full sequence is Methionyl-tRNA formyltransferase (321 aa).

112–115 contacts (6S)-5,6,7,8-tetrahydrofolate; sequence SILP.

The protein belongs to the Fmt family.

It carries out the reaction L-methionyl-tRNA(fMet) + (6R)-10-formyltetrahydrofolate = N-formyl-L-methionyl-tRNA(fMet) + (6S)-5,6,7,8-tetrahydrofolate + H(+). Its function is as follows. Attaches a formyl group to the free amino group of methionyl-tRNA(fMet). The formyl group appears to play a dual role in the initiator identity of N-formylmethionyl-tRNA by promoting its recognition by IF2 and preventing the misappropriation of this tRNA by the elongation apparatus. In Shewanella pealeana (strain ATCC 700345 / ANG-SQ1), this protein is Methionyl-tRNA formyltransferase.